The chain runs to 344 residues: UDP-3-O-acylglucosamine N-acyltransferase (344 aa).

The active-site Proton acceptor is the His-236.

Belongs to the transferase hexapeptide repeat family. LpxD subfamily. As to quaternary structure, homotrimer.

The enzyme catalyses a UDP-3-O-[(3R)-3-hydroxyacyl]-alpha-D-glucosamine + a (3R)-hydroxyacyl-[ACP] = a UDP-2-N,3-O-bis[(3R)-3-hydroxyacyl]-alpha-D-glucosamine + holo-[ACP] + H(+). It functions in the pathway bacterial outer membrane biogenesis; LPS lipid A biosynthesis. Functionally, catalyzes the N-acylation of UDP-3-O-acylglucosamine using 3-hydroxyacyl-ACP as the acyl donor. Is involved in the biosynthesis of lipid A, a phosphorylated glycolipid that anchors the lipopolysaccharide to the outer membrane of the cell. This is UDP-3-O-acylglucosamine N-acyltransferase from Nitratidesulfovibrio vulgaris (strain ATCC 29579 / DSM 644 / CCUG 34227 / NCIMB 8303 / VKM B-1760 / Hildenborough) (Desulfovibrio vulgaris).